Here is a 541-residue protein sequence, read N- to C-terminus: Arginine--tRNA ligase (541 aa).

The 'HIGH' region motif lies at 119 to 129 (ANPTGPLHIGH).

This sequence belongs to the class-I aminoacyl-tRNA synthetase family. In terms of assembly, monomer.

It localises to the cytoplasm. It carries out the reaction tRNA(Arg) + L-arginine + ATP = L-arginyl-tRNA(Arg) + AMP + diphosphate. In Helicobacter pylori (strain Shi470), this protein is Arginine--tRNA ligase.